The following is a 263-amino-acid chain: Oxygen-evolving enhancer protein 2-1, chloroplastic (263 aa).

Serine 153 bears the Phosphoserine mark.

The protein belongs to the PsbP family. In terms of assembly, interacts with WAK1.

It is found in the plastid. The protein resides in the chloroplast thylakoid lumen. Functionally, may be involved in the regulation of photosystem II. The protein is Oxygen-evolving enhancer protein 2-1, chloroplastic (PSBP1) of Arabidopsis thaliana (Mouse-ear cress).